A 400-amino-acid polypeptide reads, in one-letter code: Nicotinate phosphoribosyltransferase (400 aa).

His-220 bears the Phosphohistidine; by autocatalysis mark.

This sequence belongs to the NAPRTase family. Transiently phosphorylated on a His residue during the reaction cycle. Phosphorylation strongly increases the affinity for substrates and increases the rate of nicotinate D-ribonucleotide production. Dephosphorylation regenerates the low-affinity form of the enzyme, leading to product release.

The enzyme catalyses nicotinate + 5-phospho-alpha-D-ribose 1-diphosphate + ATP + H2O = nicotinate beta-D-ribonucleotide + ADP + phosphate + diphosphate. The protein operates within cofactor biosynthesis; NAD(+) biosynthesis; nicotinate D-ribonucleotide from nicotinate: step 1/1. Functionally, catalyzes the synthesis of beta-nicotinate D-ribonucleotide from nicotinate and 5-phospho-D-ribose 1-phosphate at the expense of ATP. The protein is Nicotinate phosphoribosyltransferase of Citrobacter koseri (strain ATCC BAA-895 / CDC 4225-83 / SGSC4696).